We begin with the raw amino-acid sequence, 424 residues long: Glucose-1-phosphate adenylyltransferase (424 aa).

Alpha-D-glucose 1-phosphate contacts are provided by residues Tyr-112, Gly-177, 192–193 (EK), and Ser-210.

The protein belongs to the bacterial/plant glucose-1-phosphate adenylyltransferase family. As to quaternary structure, homotetramer.

It carries out the reaction alpha-D-glucose 1-phosphate + ATP + H(+) = ADP-alpha-D-glucose + diphosphate. The protein operates within glycan biosynthesis; glycogen biosynthesis. Involved in the biosynthesis of ADP-glucose, a building block required for the elongation reactions to produce glycogen. Catalyzes the reaction between ATP and alpha-D-glucose 1-phosphate (G1P) to produce pyrophosphate and ADP-Glc. The sequence is that of Glucose-1-phosphate adenylyltransferase from Methylococcus capsulatus (strain ATCC 33009 / NCIMB 11132 / Bath).